The chain runs to 269 residues: Aquaporin-7 (269 aa).

The Cytoplasmic segment spans residues 1 to 20 (MAGSVLENIQSVLQKTWVRE). A Phosphoserine modification is found at serine 4. Residues 21-38 (FLAEFLSTYVLMVFGLGS) form a helical membrane-spanning segment. The Extracellular segment spans residues 39–51 (VAHMVLGERLGSY). The helical transmembrane segment at 52–69 (LGVNLGFGFGVTMGIHVA) threads the bilayer. Over 70 to 73 (GGIS) the chain is Cytoplasmic. Residues 74 to 87 (GAHMNAAVTFTNCA) constitute an intramembrane region (discontinuously helical). Positions 78-80 (NAA) match the NPA 1 motif. Residues 88–95 (LGRMAWKK) are Cytoplasmic-facing. Residues 96–116 (FPIYVLGQFLGSFLAAATTYL) form a helical membrane-spanning segment. The Extracellular segment spans residues 117–151 (IFYGAINHYAGGELLVTGPKSTANIFATYLPEHMT). Residues 152–172 (LWRGFVDEVFVTGMLQLCIFA) traverse the membrane as a helical segment. The Cytoplasmic segment spans residues 173–184 (ITDKLNSPALQG). Residues 185-201 (TEPLMIGILVCVLGVSL) form a helical membrane-spanning segment. Residues 202-205 (GMNT) lie on the Extracellular side of the membrane. The discontinuously helical intramembrane region spans 206-219 (GYAINPSRDLPPRF). The NPA 2 motif lies at 210 to 212 (NPS). Residues 220-237 (FTFIAGWGKKVFSAGNNW) are Extracellular-facing. A helical transmembrane segment spans residues 238 to 259 (WWVPVVAPLLGAYLGGIVYLGL). Over 260-269 (IHAGIPPQGS) the chain is Cytoplasmic.

Belongs to the MIP/aquaporin (TC 1.A.8) family. As to quaternary structure, homotetramer; each monomer provides an independent glycerol/water pore. Two homotetramers on opposing membranes can dimerize, forming a cell-cell junction. Interacts with PLIN1. Phosphorylation by PKA could prevent the interaction with PLIN1. As to expression, detected in heart, kidney and testis.

The protein resides in the cell membrane. The protein localises to the cytoplasmic vesicle membrane. It is found in the lipid droplet. It catalyses the reaction glycerol(in) = glycerol(out). The enzyme catalyses H2O(in) = H2O(out). It carries out the reaction urea(in) = urea(out). Its activity is regulated as follows. Glycerol transport is regulated by pH, with the porin being permeable to glycerol at pH 7.4 but not at pH 5.5. Water permeability, however, is not influenced by pH. Not inhibited by mercury ions. Its function is as follows. Aquaglyceroporins form homotetrameric transmembrane channels, with each monomer independently mediating glycerol and water transport across the plasma membrane along their osmotic gradient. Could also be permeable to urea. Mediates the efflux of glycerol, formed upon triglyceride hydrolysis, to avoid its accumulation in adipocytes and to make it available to other tissues. In the kidney, mediates the reabsorption of glycerol, preventing its loss in urine, again participating to energy homeostasis. In pancreatic beta cells, it also mediates the efflux of glycerol, regulating its intracellular levels. In Rattus norvegicus (Rat), this protein is Aquaporin-7.